We begin with the raw amino-acid sequence, 465 residues long: Transcriptional protein swt1 (465 aa).

The PINc domain maps to 70-190 (GLFVLDTNFL…LLSDDKNLSI (121 aa)).

This sequence belongs to the SWT1 family.

Its subcellular location is the cytoplasm. The protein localises to the nucleus. In terms of biological role, involved in transcription. The polypeptide is Transcriptional protein swt1 (Schizosaccharomyces pombe (strain 972 / ATCC 24843) (Fission yeast)).